Consider the following 160-residue polypeptide: Sec-independent protein translocase protein TatB (160 aa).

A helical membrane pass occupies residues 1-21 (MFGMGFFEILVVLVVAIIFLG). The interval 118 to 160 (HLNEEVSNEEALNKEVSSDESPKEVQLATDNNTKEHDKEKEHV) is disordered. 2 stretches are compositionally biased toward basic and acidic residues: residues 128–140 (ALNKEVSSDESPK) and 149–160 (NTKEHDKEKEHV).

This sequence belongs to the TatB family. The Tat system comprises two distinct complexes: a TatABC complex, containing multiple copies of TatA, TatB and TatC subunits, and a separate TatA complex, containing only TatA subunits. Substrates initially bind to the TatABC complex, which probably triggers association of the separate TatA complex to form the active translocon.

It localises to the cell inner membrane. Its function is as follows. Part of the twin-arginine translocation (Tat) system that transports large folded proteins containing a characteristic twin-arginine motif in their signal peptide across membranes. Together with TatC, TatB is part of a receptor directly interacting with Tat signal peptides. TatB may form an oligomeric binding site that transiently accommodates folded Tat precursor proteins before their translocation. The polypeptide is Sec-independent protein translocase protein TatB (Helicobacter pylori (strain HPAG1)).